Consider the following 451-residue polypeptide: Histidinol dehydrogenase (451 aa).

The segment at 1 to 20 (MLNVTDLRGHTPSKSDIRRA) is disordered. Positions 7–19 (LRGHTPSKSDIRR) are enriched in basic and acidic residues. Tyrosine 129, glutamine 193, and asparagine 218 together coordinate NAD(+). 3 residues coordinate substrate: threonine 241, glutamine 263, and histidine 266. Residues glutamine 263 and histidine 266 each coordinate Zn(2+). Residues glutamate 332 and histidine 333 each act as proton acceptor in the active site. Substrate is bound by residues histidine 333, aspartate 366, glutamate 420, and histidine 425. Aspartate 366 contacts Zn(2+). Histidine 425 serves as a coordination point for Zn(2+).

Belongs to the histidinol dehydrogenase family. The cofactor is Zn(2+).

It catalyses the reaction L-histidinol + 2 NAD(+) + H2O = L-histidine + 2 NADH + 3 H(+). Its pathway is amino-acid biosynthesis; L-histidine biosynthesis; L-histidine from 5-phospho-alpha-D-ribose 1-diphosphate: step 9/9. Its function is as follows. Catalyzes the sequential NAD-dependent oxidations of L-histidinol to L-histidinaldehyde and then to L-histidine. The chain is Histidinol dehydrogenase from Corynebacterium efficiens (strain DSM 44549 / YS-314 / AJ 12310 / JCM 11189 / NBRC 100395).